Reading from the N-terminus, the 180-residue chain is Oligoribonuclease (180 aa).

One can recognise an Exonuclease domain in the interval 7–170; that stretch reads LIWIDLEMTG…DDIRESIAEL (164 aa). The active site involves Y128.

This sequence belongs to the oligoribonuclease family.

Its subcellular location is the cytoplasm. 3'-to-5' exoribonuclease specific for small oligoribonucleotides. This chain is Oligoribonuclease, found in Pseudomonas aeruginosa (strain UCBPP-PA14).